The sequence spans 259 residues: Sugar fermentation stimulation protein homolog (259 aa).

This sequence belongs to the SfsA family.

In Chloroflexus aurantiacus (strain ATCC 29364 / DSM 637 / Y-400-fl), this protein is Sugar fermentation stimulation protein homolog.